The sequence spans 642 residues: Nocturnin (642 aa).

The tract at residues 50-87 is disordered; that stretch reads LEDDDKPPQLFSVTDEPPSPNEEDYKPPNHHEDDGKLA. Basic and acidic residues predominate over residues 72-87; it reads EDYKPPNHHEDDGKLA. E363 is a binding site for Mg(2+). Substrate contacts are provided by residues E363, N430, 453–456, 491–493, and H600; these read HLKA and DFN. The disordered stretch occupies residues 611 to 642; that stretch reads PPTENGKESGSGSGSDGENETEVEGSKHGSIQ.

It belongs to the CCR4/nocturin family. As to quaternary structure, associates to the CCR4-NOT complex composed of at least Pop2/Caf1-55, Ccr4, Not1, Rga/Not2, and Not3. It depends on Mg(2+) as a cofactor. In terms of tissue distribution, expressed in the head, in the dorsal neurons DN3, a subgroup of clock neurons (at protein level). Ubiquitously expressed in both males and females.

Its subcellular location is the cytoplasm. The enzyme catalyses NADP(+) + H2O = phosphate + NAD(+). It carries out the reaction NADPH + H2O = phosphate + NADH. In terms of biological role, phosphatase which catalyzes the conversion of NADP(+) to NAD(+) and of NADPH to NADH. Shows a small preference for NADPH over NADP(+). Because of its association with the CCR4-NOT complex, has a role in mRNA deadenylation and decay. Required at the pupal stage for proper wing morphogenesis after eclosion. Functionally, doesn't have a role in light-mediated behavioral response. In dorsal neurons, contributes to the light-mediated behavioral response. The protein is Nocturnin of Drosophila melanogaster (Fruit fly).